A 371-amino-acid polypeptide reads, in one-letter code: Histidinol-phosphate aminotransferase (371 aa).

Lysine 228 carries the post-translational modification N6-(pyridoxal phosphate)lysine.

This sequence belongs to the class-II pyridoxal-phosphate-dependent aminotransferase family. Histidinol-phosphate aminotransferase subfamily. Pyridoxal 5'-phosphate is required as a cofactor.

The catalysed reaction is L-histidinol phosphate + 2-oxoglutarate = 3-(imidazol-4-yl)-2-oxopropyl phosphate + L-glutamate. The protein operates within amino-acid biosynthesis; L-histidine biosynthesis; L-histidine from 5-phospho-alpha-D-ribose 1-diphosphate: step 7/9. This is Histidinol-phosphate aminotransferase from Methanococcus maripaludis (strain C7 / ATCC BAA-1331).